Consider the following 388-residue polypeptide: S-adenosylmethionine synthase (388 aa).

An ATP-binding site is contributed by histidine 17. Residue aspartate 19 coordinates Mg(2+). Glutamate 45 lines the K(+) pocket. 2 residues coordinate L-methionine: glutamate 58 and glutamine 101. The segment at 101-111 is flexible loop; it reads QSPDIGQGVDT. ATP is bound by residues 160–162, 226–227, aspartate 235, 241–242, alanine 258, and lysine 262; these read DGK, RF, and RK. Aspartate 235 is a binding site for L-methionine. Lysine 266 contacts L-methionine.

The protein belongs to the AdoMet synthase family. As to quaternary structure, homotetramer; dimer of dimers. Mg(2+) is required as a cofactor. Requires K(+) as cofactor.

The protein resides in the cytoplasm. The enzyme catalyses L-methionine + ATP + H2O = S-adenosyl-L-methionine + phosphate + diphosphate. Its pathway is amino-acid biosynthesis; S-adenosyl-L-methionine biosynthesis; S-adenosyl-L-methionine from L-methionine: step 1/1. In terms of biological role, catalyzes the formation of S-adenosylmethionine (AdoMet) from methionine and ATP. The overall synthetic reaction is composed of two sequential steps, AdoMet formation and the subsequent tripolyphosphate hydrolysis which occurs prior to release of AdoMet from the enzyme. The polypeptide is S-adenosylmethionine synthase (Anaeromyxobacter sp. (strain K)).